The primary structure comprises 469 residues: Trigger factor (469 aa).

The PPIase FKBP-type domain occupies 166-245 (GDFLTIDITA…VKSVKERELP (80 aa)). Residues 430–469 (GGEEEAAEAEAAPAVDSDAVEGEAATEEAAPSDDPAAVKF) form a disordered region.

The protein belongs to the FKBP-type PPIase family. Tig subfamily.

Its subcellular location is the cytoplasm. It carries out the reaction [protein]-peptidylproline (omega=180) = [protein]-peptidylproline (omega=0). Functionally, involved in protein export. Acts as a chaperone by maintaining the newly synthesized protein in an open conformation. Functions as a peptidyl-prolyl cis-trans isomerase. This is Trigger factor from Arthrobacter sp. (strain FB24).